Reading from the N-terminus, the 218-residue chain is uncharacterized protein (218 aa).

This is an uncharacterized protein from Mycoplasma genitalium (strain ATCC 33530 / DSM 19775 / NCTC 10195 / G37) (Mycoplasmoides genitalium).